The chain runs to 255 residues: Electron transfer flavoprotein subunit beta (255 aa).

N-acetylalanine is present on Ala2. AMP is bound by residues Ala9, 39-42, Cys66, and 123-134; these read NPFC and GKQAIDDDCNQT. Residues 183–205 form a recognition loop region; the sequence is ADLRLNEPRYATLPNIMKAKKKK. Lys200 carries the post-translational modification N6,N6,N6-trimethyllysine; by ETFBKMT; alternate. At Lys200 the chain carries N6-acetyllysine; alternate. An N6-methyllysine; alternate modification is found at Lys200. An N6,N6,N6-trimethyllysine; by ETFBKMT modification is found at Lys203. Position 210 is an N6-acetyllysine; alternate (Lys210). An N6-succinyllysine; alternate modification is found at Lys210. A phosphoserine mark is found at Ser223 and Ser226. Lys238 carries the post-translational modification N6-acetyllysine. Residue Lys248 is modified to N6-acetyllysine; alternate. Lys248 carries the post-translational modification N6-succinyllysine; alternate.

It belongs to the ETF beta-subunit/FixA family. As to quaternary structure, heterodimer composed of ETFA and ETFB. Identified in a complex that contains ETFA, ETFB and ETFRF1. Interacts with ACADM. Post-translationally, methylated. Trimethylation at Lys-200 and Lys-203 may negatively regulate the activity in electron transfer from acyl-CoA dehydrogenases.

The protein localises to the mitochondrion matrix. In terms of biological role, heterodimeric electron transfer flavoprotein that accepts electrons from several mitochondrial dehydrogenases, including acyl-CoA dehydrogenases, glutaryl-CoA and sarcosine dehydrogenase. It transfers the electrons to the main mitochondrial respiratory chain via ETF-ubiquinone oxidoreductase. Required for normal mitochondrial fatty acid oxidation and normal amino acid metabolism. ETFB binds an AMP molecule that probably has a purely structural role. The chain is Electron transfer flavoprotein subunit beta from Pongo abelii (Sumatran orangutan).